The following is a 333-amino-acid chain: Anthranilate phosphoribosyltransferase (333 aa).

Residues Gly81, 84–85 (GD), Thr89, 91–94 (NIST), 109–117 (KHGNRSVSS), and Ala121 each bind 5-phospho-alpha-D-ribose 1-diphosphate. Position 81 (Gly81) interacts with anthranilate. Residue Ser93 coordinates Mg(2+). Asn112 serves as a coordination point for anthranilate. Arg167 lines the anthranilate pocket. Residues Asp225 and Glu226 each contribute to the Mg(2+) site.

The protein belongs to the anthranilate phosphoribosyltransferase family. In terms of assembly, homodimer. Mg(2+) is required as a cofactor.

The catalysed reaction is N-(5-phospho-beta-D-ribosyl)anthranilate + diphosphate = 5-phospho-alpha-D-ribose 1-diphosphate + anthranilate. It functions in the pathway amino-acid biosynthesis; L-tryptophan biosynthesis; L-tryptophan from chorismate: step 2/5. In terms of biological role, catalyzes the transfer of the phosphoribosyl group of 5-phosphorylribose-1-pyrophosphate (PRPP) to anthranilate to yield N-(5'-phosphoribosyl)-anthranilate (PRA). The polypeptide is Anthranilate phosphoribosyltransferase (Haemophilus influenzae (strain PittEE)).